A 242-amino-acid chain; its full sequence is Eukaryotic translation initiation factor 3 subunit J (242 aa).

A compositionally biased stretch (acidic residues) spans 1 to 10 (MASWDDEDFE). Disordered stretches follow at residues 1 to 58 (MASW…KAQR), 71 to 97 (MKLK…MMNA), and 201 to 242 (REEK…DDFM). The segment covering 11-21 (VPAAATPAVPA) has biased composition (low complexity). Residues 23 to 38 (WDDDEEEDVMDSWDAE) are compositionally biased toward acidic residues. Basic and acidic residues predominate over residues 71–89 (MKLKPEDASTKRDRQRQAE).

The protein belongs to the eIF-3 subunit J family. As to quaternary structure, component of the eukaryotic translation initiation factor 3 (eIF-3) complex.

The protein localises to the cytoplasm. Component of the eukaryotic translation initiation factor 3 (eIF-3) complex, which is involved in protein synthesis of a specialized repertoire of mRNAs and, together with other initiation factors, stimulates binding of mRNA and methionyl-tRNAi to the 40S ribosome. The eIF-3 complex specifically targets and initiates translation of a subset of mRNAs involved in cell proliferation. The protein is Eukaryotic translation initiation factor 3 subunit J of Yarrowia lipolytica (strain CLIB 122 / E 150) (Yeast).